Reading from the N-terminus, the 541-residue chain is Halolysin-like extracellular serine protease Nep (541 aa).

Residues 1 to 33 constitute a signal peptide (tat-type signal); sequence MTRDTNSNVGRRSVLKAASALGAFLGLGGVASA. Positions 34 to 121 are excised as a propeptide; the sequence is TPGREPGPKK…DNATYETLEV (88 aa). Residues 130–405 enclose the Peptidase S8 domain; it reads QYAPQQVNCE…YGRVDAELAV (276 aa). Catalysis depends on charge relay system residues Asp157, His198, and Ser351. Positions 403-453 are disordered; the sequence is LAVTTDPDNGDDDDDDDDDEDDPGDGECGDETNTATADGELSGGWGGNPSD. Over residues 410–432 the composition is skewed to acidic residues; sequence DNGDDDDDDDDDEDDPGDGECGD.

Belongs to the peptidase S8 family. In terms of assembly, monomer. In terms of processing, exported by the Tat system. The position of the signal peptide cleavage has not been experimentally proven. After transport across the membrane, the propeptide is probably processed autocatalytically, yielding the mature fully active protease.

The protein localises to the secreted. With respect to regulation, dependent on high salt concentrations for activity and stability. Strongly inhibited by the serine protease inhibitors diisopropyl fluorophosphate (DFP), phenylmethyl sulfonylfluoride (PMSF) and chymostatin. Also inhibited by denaturing agents such as SDS, urea, and HCl guanidinium. Activated by thiol-containing reducing agents such as dithiotreitol (DTT) and 2-mercaptoethanol. Functionally, serine protease that hydrolyzes large proteins such as casein and gelatin. Cleaves preferentially at the carboxyl terminus of Phe, Tyr or Leu. Is also able to catalyze peptide synthesis under different salt concentrations in the presence of dimethyl sulfoxide (DMSO). The chain is Halolysin-like extracellular serine protease Nep from Natrialba magadii.